The sequence spans 434 residues: CinA-like protein (434 aa).

The protein belongs to the CinA family.

The sequence is that of CinA-like protein from Mycobacterium avium (strain 104).